Here is a 186-residue protein sequence, read N- to C-terminus: Orotate phosphoribosyltransferase (186 aa).

Residues R93, K94, K97, H99, and 119 to 127 (EDVTTTGGS) each bind 5-phospho-alpha-D-ribose 1-diphosphate. The orotate site is built by T123 and R151.

It belongs to the purine/pyrimidine phosphoribosyltransferase family. PyrE subfamily. As to quaternary structure, homodimer. Mg(2+) is required as a cofactor.

It carries out the reaction orotidine 5'-phosphate + diphosphate = orotate + 5-phospho-alpha-D-ribose 1-diphosphate. It participates in pyrimidine metabolism; UMP biosynthesis via de novo pathway; UMP from orotate: step 1/2. In terms of biological role, catalyzes the transfer of a ribosyl phosphate group from 5-phosphoribose 1-diphosphate to orotate, leading to the formation of orotidine monophosphate (OMP). In Pyrococcus horikoshii (strain ATCC 700860 / DSM 12428 / JCM 9974 / NBRC 100139 / OT-3), this protein is Orotate phosphoribosyltransferase.